Here is a 412-residue protein sequence, read N- to C-terminus: Poly-beta-1,6-N-acetyl-D-glucosamine synthase (412 aa).

4 helical membrane-spanning segments follow: residues 6-26 (FLLF…IYFY), 298-318 (IISI…FITA), 332-352 (IFLL…TVAL), and 366-386 (LIFV…VVLV).

This sequence belongs to the glycosyltransferase 2 family.

It localises to the cell membrane. Functionally, N-acetylglucosaminyltransferase that catalyzes the polymerization of single monomer units of UDP-N-acetylglucosamine to produce the linear homomer poly-beta-1,6-N-acetyl-D-glucosamine (PNAG, also referred to as PIA), a biofilm adhesin polysaccharide. Requires IcaD for full activity. The protein is Poly-beta-1,6-N-acetyl-D-glucosamine synthase (icaA) of Staphylococcus aureus (strain NCTC 8325 / PS 47).